We begin with the raw amino-acid sequence, 80 residues long: Defensin-like protein 2 (80 aa).

Residues 1–29 (MAKFASIIVLLFVALVVFAAFEEPTMVEA) form the signal peptide. Gln-30 is modified (pyrrolidone carboxylic acid). 4 disulfides stabilise this stretch: Cys-33–Cys-80, Cys-44–Cys-65, Cys-50–Cys-74, and Cys-54–Cys-76.

The protein belongs to the DEFL family.

The protein resides in the secreted. Possesses antifungal activity sensitive to inorganic cations. Induces potential changes in fungal membranes and increased K(+) efflux and Ca(2+) uptake. This chain is Defensin-like protein 2 (AFP2), found in Raphanus sativus (Radish).